Reading from the N-terminus, the 767-residue chain is 5-methyltetrahydropteroyltriglutamate--homocysteine methyltransferase (767 aa).

5-methyltetrahydropteroyltri-L-glutamate contacts are provided by residues 17 to 20 (RELK) and lysine 117. L-homocysteine-binding positions include 441 to 443 (IGS) and glutamate 494. L-methionine-binding positions include 441–443 (IGS) and glutamate 494. Residues 525–526 (RC) and tryptophan 571 each bind 5-methyltetrahydropteroyltri-L-glutamate. An L-homocysteine-binding site is contributed by aspartate 609. Aspartate 609 serves as a coordination point for L-methionine. A 5-methyltetrahydropteroyltri-L-glutamate-binding site is contributed by glutamate 615. Residues histidine 652, cysteine 654, and glutamate 676 each coordinate Zn(2+). The active-site Proton donor is the histidine 705. Cysteine 737 contacts Zn(2+).

The protein belongs to the vitamin-B12 independent methionine synthase family. The cofactor is Zn(2+).

The catalysed reaction is 5-methyltetrahydropteroyltri-L-glutamate + L-homocysteine = tetrahydropteroyltri-L-glutamate + L-methionine. It functions in the pathway amino-acid biosynthesis; L-methionine biosynthesis via de novo pathway; L-methionine from L-homocysteine (MetE route): step 1/1. In terms of biological role, catalyzes the transfer of a methyl group from 5-methyltetrahydrofolate to homocysteine resulting in methionine formation. The protein is 5-methyltetrahydropteroyltriglutamate--homocysteine methyltransferase of Bifidobacterium longum subsp. infantis (strain ATCC 15697 / DSM 20088 / JCM 1222 / NCTC 11817 / S12).